A 275-amino-acid chain; its full sequence is MGIRLYRAYTPGTRFRSVSEFTDITRSKPEKSLTYGRHRSQGRNNRGIITSRHRGGGHKRLSREIDFRRDKVGIPARVATIEYDPNRNCRIALLNYQDGEKRYVLHPRGLMVGEEIIAGPDAPLQLGNALPLSKIPLGTGIHNIEVSPGQGGKLVRAAGGVAQLVAKEGSYVTVRLPSGEVRLVLKECSATIGQVGNVDASNVTIGKAGRKRWLGQRPKVRGVVMNPVDHPHGGGEGRAPIGRSKPVTPWGHPALGKRTRKRNKYSNALIIRRRK.

Disordered regions lie at residues 29-60 (PEKSLTYGRHRSQGRNNRGIITSRHRGGGHKR) and 225-252 (MNPVDHPHGGGEGRAPIGRSKPVTPWGH). Residues 51-60 (SRHRGGGHKR) show a composition bias toward basic residues.

The protein belongs to the universal ribosomal protein uL2 family. As to quaternary structure, part of the 50S ribosomal subunit.

The protein resides in the plastid. It localises to the chloroplast. The chain is Large ribosomal subunit protein uL2c (rpl2) from Chlorokybus atmophyticus (Soil alga).